A 260-amino-acid polypeptide reads, in one-letter code: Cytochrome c oxidase subunit 3 (260 aa).

Topologically, residues 1-15 (MTHQTHAYHMVNPSP) are mitochondrial matrix. Residues 16–34 (WPLTGALSALLMTSGLAMW) traverse the membrane as a helical segment. At 35–40 (FHFNST) the chain is on the mitochondrial intermembrane side. A helical membrane pass occupies residues 41 to 66 (ALLMIGLTTNMLTMYQWWRDIIREST). Residues 67-72 (FQGHHT) are Mitochondrial matrix-facing. A helical transmembrane segment spans residues 73–105 (PAVQKGLRYGMILFIISEVLFFTGFFWAFYHSS). Over 106–128 (LAPTPELGGCWPPTGIHPLNPLE) the chain is Mitochondrial intermembrane. The helical transmembrane segment at 129–152 (VPLLNTSVLLASGVSITWAHHSLM) threads the bilayer. The Mitochondrial matrix portion of the chain corresponds to 153 to 155 (EGD). A helical membrane pass occupies residues 156 to 183 (RNHMLQALFITITLGVYFTLLQASEYYE). Topologically, residues 184–190 (APFTISD) are mitochondrial intermembrane. Residues 191-223 (GVYGSTFFVATGFHGLHVIIGSTFLIVCFFRQL) traverse the membrane as a helical segment. At 224 to 232 (KFHFTSNHH) the chain is on the mitochondrial matrix side. Residues 233–256 (FGFEAAAWYWHFVDVVWLFLYVSI) traverse the membrane as a helical segment. Residues 257-260 (YWWG) lie on the Mitochondrial intermembrane side of the membrane.

The protein belongs to the cytochrome c oxidase subunit 3 family. In terms of assembly, component of the cytochrome c oxidase (complex IV, CIV), a multisubunit enzyme composed of 14 subunits. The complex is composed of a catalytic core of 3 subunits MT-CO1, MT-CO2 and MT-CO3, encoded in the mitochondrial DNA, and 11 supernumerary subunits COX4I, COX5A, COX5B, COX6A, COX6B, COX6C, COX7A, COX7B, COX7C, COX8 and NDUFA4, which are encoded in the nuclear genome. The complex exists as a monomer or a dimer and forms supercomplexes (SCs) in the inner mitochondrial membrane with NADH-ubiquinone oxidoreductase (complex I, CI) and ubiquinol-cytochrome c oxidoreductase (cytochrome b-c1 complex, complex III, CIII), resulting in different assemblies (supercomplex SCI(1)III(2)IV(1) and megacomplex MCI(2)III(2)IV(2)).

The protein localises to the mitochondrion inner membrane. The enzyme catalyses 4 Fe(II)-[cytochrome c] + O2 + 8 H(+)(in) = 4 Fe(III)-[cytochrome c] + 2 H2O + 4 H(+)(out). In terms of biological role, component of the cytochrome c oxidase, the last enzyme in the mitochondrial electron transport chain which drives oxidative phosphorylation. The respiratory chain contains 3 multisubunit complexes succinate dehydrogenase (complex II, CII), ubiquinol-cytochrome c oxidoreductase (cytochrome b-c1 complex, complex III, CIII) and cytochrome c oxidase (complex IV, CIV), that cooperate to transfer electrons derived from NADH and succinate to molecular oxygen, creating an electrochemical gradient over the inner membrane that drives transmembrane transport and the ATP synthase. Cytochrome c oxidase is the component of the respiratory chain that catalyzes the reduction of oxygen to water. Electrons originating from reduced cytochrome c in the intermembrane space (IMS) are transferred via the dinuclear copper A center (CU(A)) of subunit 2 and heme A of subunit 1 to the active site in subunit 1, a binuclear center (BNC) formed by heme A3 and copper B (CU(B)). The BNC reduces molecular oxygen to 2 water molecules using 4 electrons from cytochrome c in the IMS and 4 protons from the mitochondrial matrix. The chain is Cytochrome c oxidase subunit 3 (MT-CO3) from Bos mutus grunniens (Wild yak).